The chain runs to 112 residues: MFGKAGIAGLMKQAQQMQENMKKAQEELAKVEVEGQSGAGMVKVTMTCSHDVKRVAIDDSVLEDAKEDKEMLEDLIAAAFNDAVRKVEATTQERMSGFTNGLNLPAGMKFPF.

The protein belongs to the YbaB/EbfC family. In terms of assembly, homodimer.

It is found in the cytoplasm. The protein resides in the nucleoid. Functionally, binds to DNA and alters its conformation. May be involved in regulation of gene expression, nucleoid organization and DNA protection. The chain is Nucleoid-associated protein CV_1611 from Chromobacterium violaceum (strain ATCC 12472 / DSM 30191 / JCM 1249 / CCUG 213 / NBRC 12614 / NCIMB 9131 / NCTC 9757 / MK).